The following is a 424-amino-acid chain: UDP-N-acetylglucosamine 1-carboxyvinyltransferase (424 aa).

Lys22–Asn23 lines the phosphoenolpyruvate pocket. Residue Arg93 participates in UDP-N-acetyl-alpha-D-glucosamine binding. Cys117 serves as the catalytic Proton donor. Residue Cys117 is modified to 2-(S-cysteinyl)pyruvic acid O-phosphothioketal. Residues Arg122–Leu126, Lys162–Val165, Asp307, and Ile329 each bind UDP-N-acetyl-alpha-D-glucosamine.

This sequence belongs to the EPSP synthase family. MurA subfamily.

It is found in the cytoplasm. The catalysed reaction is phosphoenolpyruvate + UDP-N-acetyl-alpha-D-glucosamine = UDP-N-acetyl-3-O-(1-carboxyvinyl)-alpha-D-glucosamine + phosphate. It participates in cell wall biogenesis; peptidoglycan biosynthesis. Functionally, cell wall formation. Adds enolpyruvyl to UDP-N-acetylglucosamine. In Haemophilus influenzae (strain 86-028NP), this protein is UDP-N-acetylglucosamine 1-carboxyvinyltransferase.